Here is a 946-residue protein sequence, read N- to C-terminus: DNA primase (946 aa).

The interval 596–626 (RDTEEDEDGKENKNNVPDNGVFQKTTSSVDT) is disordered. Positions 617–626 (FQKTTSSVDT) are enriched in polar residues. The CHC2-type zinc finger occupies 881-920 (CLNYTHRNPQETVQVFIDLRTEHSYALWASLWSRCFTKKC).

This sequence belongs to the herpesviridae DNA primase family. In terms of assembly, associates with the helicase and the primase-associated factor to form the helicase-primase factor. Interacts with host SNAPIN.

The protein resides in the host nucleus. Functionally, essential component of the helicase/primase complex. Unwinds the DNA at the replication forks and generates single-stranded DNA for both leading and lagging strand synthesis. The primase initiates primer synthesis and thereby produces large amount of short RNA primers on the lagging strand that the polymerase elongates using dNTPs. The chain is DNA primase (UL70) from Homo sapiens (Human).